Consider the following 966-residue polypeptide: MNRFNGLCKVCSERRYRQITIRRGKDGFGFTICCDSPVRVQAVDSGGPAERAGLQQLDTVLQLNERPVEHWKCVELAHEIRSCPSEIILLVWRVVPQIKPGPDGGVLRRASCKSTHDLLSPPNKREKNCTHGAPVRPEQRHSCHLVCDSSDGLLLGGWERYTEVGKRSGQHTLPALSRTTTPTDPNYIILAPLNPGSQLLRPVYQEDTIPEEPGTTTKGKSYTGLGKKSRLMKTVQTMKGHSNYQDCSALRPHIPHSSYGTYVTLAPKVLVFPVFVQPLDLCNPARTLLLSEELLLYEGRNKTSQVTLFAYSDLLLFTKEEEPGRCDVLRNPLYLQSVKLQEGSSEDLKFCVLYLAEKAECLFTLEAHSQEQKKRVCWCLSENIAKQQQLAAPPTERKMFETEADEKEMPLVEGKGPGAEEPAPSKNPSPGQELPPGQDLPPSKDPSPSQELPAGQDLPPSKDPSPSQELPAGQDLPPSKDPSPSQELPVGQDLPPRKDSSGQEAAPGPESPSSEDIATCPKPPQSPETSTSKDSPPGQGSSPTTELPSCQGLPAGQESTSQDPLLSQEPPVIPESSASVQKRLPSQESPSSLGSLPEKDLAEQTISSGEPPVATGAVLPASRPNFVIPEVRLDNAYSQLDGAHGGSSGEDEDAEEGEEGGEGEEDEEDDTSDDNYGDRSEAKRSSLIETGQGAEGGFSLRVQNSLRRRTHSEGSLLQESRGPCFASDTTLHCSDGEGATSTWAIPSPRTLKKELGRNGGSMHHLSLFFTGHRKMSGTDLTECDEASRKRKSKNIAKDMKNKLAIFRRRNESPGAQPASKTDKTTKSFKPTSEEALKWSESLEKLLLHKYGLEVFQAFLRTEFSEENLEFWLACEDFKKVKSQSKMAAKAKKIFAEFIAIQACKEVNLDSYTREHTKENLQSITRGCFDLAQKRIFGLMEKDSYPRFLRSDLYLDLINQKKMSPPL.

The PDZ domain occupies 18–95; that stretch reads QITIRRGKDG…EIILLVWRVV (78 aa). A disordered region spans residues 115 to 135; sequence THDLLSPPNKREKNCTHGAPV. Arg-167 carries the omega-N-methylarginine modification. Disordered regions lie at residues 403-618 and 637-704; these read EADE…TGAV and YSQL…RVQN. Polar residues-rich tracts occupy residues 527 to 548 and 576 to 594; these read PETS…TELP and SSAS…SSLG. The segment covering 649–675 has biased composition (acidic residues); sequence GEDEDAEEGEEGGEGEEDEEDDTSDDN. The segment covering 676–686 has biased composition (basic and acidic residues); the sequence is YGDRSEAKRSS. Residues Ser-712, Ser-715, Ser-747, and Ser-776 each carry the phosphoserine modification. Residues 806–830 form a disordered region; it reads FRRRNESPGAQPASKTDKTTKSFKP. A compositionally biased stretch (basic and acidic residues) spans 820 to 830; the sequence is KTDKTTKSFKP. The RGS domain occupies 841 to 966; sequence SLEKLLLHKY…INQKKMSPPL (126 aa).

As to quaternary structure, binds the GNB1-GNG2 heterodimer. Binds EFNB1 and EFNB2. Post-translationally, phosphorylated by cyclic GMP-dependent protein kinase. In terms of processing, ISGylated. Detected in embryos from E8.5-16.5 in cortical ventricular zone, dorsal root ganglia and cerebellar primordia. Isoform 3 is detected in testis and in spermatocytes from newborn mice. Levels increase and reach a maximum after 21 days; after this they decrease again. Long isoforms are widely expressed.

Its subcellular location is the cytoplasm. It is found in the cell membrane. The protein resides in the nucleus. Functionally, down-regulates signaling from heterotrimeric G-proteins by increasing the GTPase activity of the alpha subunits, thereby driving them into their inactive GDP-bound form. Down-regulates G-protein-mediated release of inositol phosphates and activation of MAP kinases. The sequence is that of Regulator of G-protein signaling 3 (Rgs3) from Mus musculus (Mouse).